Here is a 317-residue protein sequence, read N- to C-terminus: Melanocyte-stimulating hormone receptor (317 aa).

A disordered region spans residues 1 to 28 (MPMQGAQGRLRGSLNATPPTTPHSGLAG). The Extracellular segment spans residues 1-37 (MPMQGAQGRLRGSLNATPPTTPHSGLAGNQTGPWCLE). N29 carries N-linked (GlcNAc...) asparagine glycosylation. Residues 38-63 (VSIPDELFLSLGLVSLVENMLVVAAI) traverse the membrane as a helical segment. The Cytoplasmic segment spans residues 64–72 (AKNRNLHSP). The chain crosses the membrane as a helical span at residues 73-93 (MYYFICCLAVSDLLVSVSNVL). At 94-118 (ETAVMLLLEAGVLAAWAGVVQQLDN) the chain is on the extracellular side. The chain crosses the membrane as a helical span at residues 119–140 (AIDVFICGSMVSSLCFLGAIAV). The Cytoplasmic portion of the chain corresponds to 141-163 (DRYITIFYALRYHSIVTLPRARW). The chain crosses the membrane as a helical span at residues 164–183 (AIATIWAASVVCSTLFIAYY). Over 184 to 191 (DCTAVLLC) the chain is Extracellular. A helical membrane pass occupies residues 192 to 211 (LVSFFLALVVLMAVLYMHML). The Cytoplasmic segment spans residues 212–240 (ARACLHARSIARLHKRWRPVHQGLGLKGA). A helical transmembrane segment spans residues 241–266 (ATLSILLGSFFLCWGPFFLHLTLIVL). Over 267–279 (CPQHPTCSCVFKN) the chain is Extracellular. Residues 280-300 (FKLFLTLIICNSIVDPLIYAF) form a helical membrane-spanning segment. The Cytoplasmic portion of the chain corresponds to 301–317 (RSQELRKTLKEVLLCSW). The S-palmitoyl cysteine moiety is linked to residue C315.

Belongs to the G-protein coupled receptor 1 family. In terms of assembly, interacts with MGRN1, but does not undergo MGRN1-mediated ubiquitination; this interaction competes with GNAS-binding and thus inhibits agonist-induced cAMP production. Interacts with OPN3; the interaction results in a decrease in MC1R-mediated cAMP signaling and ultimately a decrease in melanin production in melanocytes.

The protein localises to the cell membrane. Functionally, receptor for MSH (alpha, beta and gamma) and ACTH. The activity of this receptor is mediated by G proteins which activate adenylate cyclase. Mediates melanogenesis, the production of eumelanin (black/brown) and phaeomelanin (red/yellow), via regulation of cAMP signaling in melanocytes. This is Melanocyte-stimulating hormone receptor (MC1R) from Mammuthus primigenius (Siberian woolly mammoth).